The following is a 1304-amino-acid chain: Splicing factor 3B subunit 1 (1304 aa).

Disordered regions lie at residues 100-119 (QYDPFAEHRPPKIADREDEY) and 124-148 (RTMIISPERLDPFADGGKTPDPKMN). Positions 104–119 (FAEHRPPKIADREDEY) are enriched in basic and acidic residues. Position 125 is a phosphothreonine (threonine 125). Serine 129 carries the phosphoserine modification. An N6-acetyllysine modification is found at lysine 141. Threonine 142 carries the phosphothreonine modification. The residue at position 157 (arginine 157) is a Citrulline. The interval 172–360 (LAEKAKAGEL…PVLTPGKTPI (189 aa)) is disordered. A Phosphoserine modification is found at serine 194. Phosphothreonine occurs at positions 203, 207, and 211. Lysine 214 is subject to N6-acetyllysine; alternate. Lysine 214 is covalently cross-linked (Glycyl lysine isopeptide (Lys-Gly) (interchain with G-Cter in SUMO2); alternate). 2 positions are modified to phosphothreonine: threonine 223 and threonine 227. Residues 223–491 (TPGHTPSLRW…VDESTLSPEE (269 aa)) form an interaction with PPP1R8 region. Serine 229 carries the post-translational modification Phosphoserine. A compositionally biased stretch (basic and acidic residues) spans 231-241 (RWDETPGRAKG). Residues threonine 235, threonine 244, threonine 248, threonine 257, threonine 261, threonine 267, threonine 273, and threonine 278 each carry the phosphothreonine modification. At serine 287 the chain carries Phosphoserine. Positions 291–304 (NRWDETPKTERDTP) are enriched in basic and acidic residues. A phosphothreonine mark is found at threonine 296, threonine 299, threonine 303, and threonine 313. Serine 322 bears the Phosphoserine mark. A phosphothreonine mark is found at threonine 326 and threonine 328. Serine 332 carries the phosphoserine modification. A Phosphothreonine modification is found at threonine 341. Polar residues predominate over residues 342 to 352 (PASQMGGSTPV). 2 positions are modified to phosphoserine: serine 344 and serine 349. Residues threonine 350 and threonine 354 each carry the phosphothreonine modification. A Phosphoserine modification is found at serine 400. Lysine 413 participates in a covalent cross-link: Glycyl lysine isopeptide (Lys-Gly) (interchain with G-Cter in SUMO2); alternate. Residue lysine 413 forms a Glycyl lysine isopeptide (Lys-Gly) (interchain with G-Cter in SUMO1); alternate linkage. Threonine 426 carries the phosphothreonine modification. Lysine 430 is covalently cross-linked (Glycyl lysine isopeptide (Lys-Gly) (interchain with G-Cter in SUMO2)). Threonine 434 is modified (phosphothreonine; by DYRK1A). Threonine 436 carries the post-translational modification Phosphothreonine. The residue at position 488 (serine 488) is a Phosphoserine. 11 HEAT repeats span residues 529–568 (GPLFNQILPLLMSPTLEDQERHLLVKVIDRILYKLDDLVR), 569–603 (PYVHKILVVIEPLLIDEDYYARVEGREIISNLAKA), 604–641 (AGLATMISTMRPDIDNMDEYVRNTTARAFAVVASALGI), 643–677 (SLLPFLKAVCKSKKSWQARHTGIKIVQQIAILMGC), 680–718 (LPHLRSLVEIIEHGLVDEQQKVRTISALAIAALAEAATP), 763–801 (NYYTREVMLILIREFQSPDEEMKKIVLKVVKQCCGTDGV), 843–881 (KVGAAEIISRIVDDLKDEAEQYRKMVMETIEKIMGNLGA), 1010–1048 (TPPIKDLLPRLTPILKNRHEKVQENCIDLVGRIADRGAE), 1052–1090 (AREWMRICFELLELLKAHKKAIRRATVNTFGYIAKAIGP), 1122–1160 (TCSPFTVLPALMNEYRVPELNVQNGVLKSLSFLFEYIGE), and 1163–1201 (KDYIYAVTPLLEDALMDRDLVHRQTASAVVQHMSLGVYG). The segment at 547–550 (QERH) is interaction with PHF5A. N6-acetyllysine occurs at positions 554 and 562. The interval 1156-1157 (EY) is interaction with PHF5A. The segment at 1248–1304 (QYCLQGLFHPARKVRDVYWKIYNSIYIGSQDALIAHYPRIYNDDKNTYIRYDLDYIL) is interaction with SF3B3 and SF3B5.

This sequence belongs to the SF3B1 family. Component of the 17S U2 SnRNP complex, a ribonucleoprotein complex that contains small nuclear RNA (snRNA) U2 and a number of specific proteins. Part of the SF3B subcomplex of the 17S U2 SnRNP complex. SF3B associates with the splicing subcomplex SF3A and a 12S RNA unit to form the U2 small nuclear ribonucleoproteins complex (U2 snRNP). Within the SF3B complex, interacts directly (via HEAT domain) with SF3B3, SF3B5, SF3B6 and (via HEAT domain) with PHF5A. The SF3B subcomplex interacts with U2AF2. Identified in the spliceosome C complex. Component of the minor (U12-type spliceosome) spliceosome. Within the minor spliceosome complex, interacts with SCNM1 and CRIPT. Component of the B-WICH complex, at least composed of SMARCA5/SNF2H, BAZ1B/WSTF, SF3B1, DEK, MYO1C, ERCC6, MYBBP1A and DDX21. Phosphorylated form interacts with PPP1R8. Interacts with PQBP1. Interacts with RBM17. Interacts with RBM39. Interacts with SETX. Interacts with RBM15. Interacts with USH1G. Interacts with SDE2. Interacts with U2AF1. Interacts with CACTIN. Interacts with ZRSR1. Interacts with CYREN. Post-translationally, phosphorylated. Phosphorylation occurs concomitantly with the splicing catalytic steps. Phosphorylation on Thr-244, Thr-248 and Thr-313 by cyclin-dependent kinases promotes interaction with PPP1R8 during mitosis. Citrullinated by PADI4. As to expression, ubiquitous.

It is found in the nucleus. Its subcellular location is the nucleus speckle. Component of the 17S U2 SnRNP complex of the spliceosome, a large ribonucleoprotein complex that removes introns from transcribed pre-mRNAs. The 17S U2 SnRNP complex (1) directly participates in early spliceosome assembly and (2) mediates recognition of the intron branch site during pre-mRNA splicing by promoting the selection of the pre-mRNA branch-site adenosine, the nucleophile for the first step of splicing. Within the 17S U2 SnRNP complex, SF3B1 is part of the SF3B subcomplex, which is required for 'A' complex assembly formed by the stable binding of U2 snRNP to the branchpoint sequence in pre-mRNA. Sequence independent binding of SF3A and SF3B subcomplexes upstream of the branch site is essential, it may anchor U2 snRNP to the pre-mRNA. May also be involved in the assembly of the 'E' complex. Also acts as a component of the minor spliceosome, which is involved in the splicing of U12-type introns in pre-mRNAs. Together with other U2 snRNP complex components may also play a role in the selective processing of microRNAs (miRNAs) from the long primary miRNA transcript, pri-miR-17-92. The chain is Splicing factor 3B subunit 1 from Mus musculus (Mouse).